A 372-amino-acid polypeptide reads, in one-letter code: Putative glutamate--cysteine ligase 2 (372 aa).

The protein belongs to the glutamate--cysteine ligase type 2 family. YbdK subfamily. Homodimer.

It catalyses the reaction L-cysteine + L-glutamate + ATP = gamma-L-glutamyl-L-cysteine + ADP + phosphate + H(+). In terms of biological role, ATP-dependent carboxylate-amine ligase which exhibits weak glutamate--cysteine ligase activity. This Citrobacter koseri (strain ATCC BAA-895 / CDC 4225-83 / SGSC4696) protein is Putative glutamate--cysteine ligase 2.